A 445-amino-acid chain; its full sequence is DNA repair protein RadA (445 aa).

A C4-type zinc finger spans residues 10–27; it reads CSNCANISNKWSGQCFDC. ATP is bound at residue 90–97; that stretch reads GEPGIGKS. Residues 249 to 253 carry the RadA KNRFG motif motif; sequence KNRFG. Positions 348 to 445 are lon-protease-like; it reads EIYLSIAGGL…HLQELKEIIK (98 aa).

It belongs to the RecA family. RadA subfamily.

DNA-dependent ATPase involved in processing of recombination intermediates, plays a role in repairing DNA breaks. Stimulates the branch migration of RecA-mediated strand transfer reactions, allowing the 3' invading strand to extend heteroduplex DNA faster. Binds ssDNA in the presence of ADP but not other nucleotides, has ATPase activity that is stimulated by ssDNA and various branched DNA structures, but inhibited by SSB. Does not have RecA's homology-searching function. This chain is DNA repair protein RadA, found in Rickettsia prowazekii (strain Madrid E).